The sequence spans 67 residues: MNFYKYLVVLVVLVLCLSATQTEARGFRKHFNKLVKKVKHTISETAHVAKDTAVIAGSGAAVVAATG.

The N-terminal stretch at Met-1–Ala-24 is a signal peptide. Thr-66 bears the Threonine amide mark.

As to expression, constitutively expressed in the adult anterior midgut; proventriculus, thoracic and reservoir regions.

Its subcellular location is the secreted. Functionally, has antimicrobial activity against most Gram-positive and Gram-negative bacteria, filamentous fungi and yeasts tested. Has trypanolytic effect on T.b.rhodesiense and limited hemolytic activity against bovine red blood cells. In terms of biological role, may play an important role in protecting the stored blood in the anterior midgut from microorganisms prior to digestion. Adopts an amphipathic alpha-helical structure only in the presence of an organic solvent that mimics a phospholipid membrane. This Stomoxys calcitrans (Stable fly) protein is Stomoxyn.